The chain runs to 228 residues: 2-phospho-L-lactate guanylyltransferase (228 aa).

It belongs to the CofC family. In terms of assembly, homodimer.

The catalysed reaction is (2S)-2-phospholactate + GTP + H(+) = (2S)-lactyl-2-diphospho-5'-guanosine + diphosphate. It participates in cofactor biosynthesis; coenzyme F420 biosynthesis. Functionally, guanylyltransferase that catalyzes the activation of (2S)-2-phospholactate (2-PL) as (2S)-lactyl-2-diphospho-5'-guanosine, via the condensation of 2-PL with GTP. It is involved in the biosynthesis of coenzyme F420, a hydride carrier cofactor. This chain is 2-phospho-L-lactate guanylyltransferase, found in Methanosphaera stadtmanae (strain ATCC 43021 / DSM 3091 / JCM 11832 / MCB-3).